Consider the following 33-residue polypeptide: Nigrocin-1 (33 aa).

The cysteines at positions 27 and 33 are disulfide-linked.

This sequence belongs to the frog skin active peptide (FSAP) family. Brevinin subfamily. As to expression, expressed by the skin dorsal glands.

The protein localises to the secreted. Its function is as follows. Shows antibacterial activity against both Gram-positive and Gram-negative bacteria and against the fungus C.albicans. Has no hemolytic activity. The sequence is that of Nigrocin-1 from Pelophylax nigromaculatus (Black-spotted frog).